The sequence spans 247 residues: PF03932 family protein CutC (247 aa).

The segment covering 205 to 222 (KSTRPSLMESNSSAQMGS) has biased composition (polar residues). The disordered stretch occupies residues 205 to 226 (KSTRPSLMESNSSAQMGSNDVD).

This sequence belongs to the CutC family.

Its subcellular location is the cytoplasm. The chain is PF03932 family protein CutC from Vibrio atlanticus (strain LGP32) (Vibrio splendidus (strain Mel32)).